The chain runs to 100 residues: MATIADSRDIILAPVISEKSYGLLDDNVYTFVVHPDSNKTQIKIAIEKIFSVKVASVNTSNRKGKCKRTRTGFGRRKNTKRAIVTLAPGSKSIDLFGTPA.

The protein belongs to the universal ribosomal protein uL23 family. In terms of assembly, part of the 50S ribosomal subunit. Contacts protein L29, and trigger factor when it is bound to the ribosome.

Functionally, one of the early assembly proteins it binds 23S rRNA. One of the proteins that surrounds the polypeptide exit tunnel on the outside of the ribosome. Forms the main docking site for trigger factor binding to the ribosome. The polypeptide is Large ribosomal subunit protein uL23 (Mycobacterium leprae (strain Br4923)).